Reading from the N-terminus, the 576-residue chain is Calcium-dependent protein kinase 11 (576 aa).

The N-myristoyl glycine moiety is linked to residue glycine 2. The disordered stretch occupies residues 27-88; that stretch reads PADAAPPALP…ANKAAPKVKR (62 aa). Residues 41–56 show a composition bias toward low complexity; the sequence is APSDQAPEPVTIPPSE. Positions 113-371 constitute a Protein kinase domain; the sequence is YTIGKKLGQG…AHEALCHPWV (259 aa). Residues 119-127 and lysine 142 contribute to the ATP site; that span reads LGQGQFGTT. Aspartate 237 serves as the catalytic Proton acceptor. The segment at 377–407 is autoinhibitory domain; it reads APDKPLDSAVLSRLKQFSAMNKLKKMALRVI. EF-hand domains are found at residues 414–449, 450–485, 486–521, and 522–555; these read EEIA…VGAN, LMDS…INKV, EKED…FGIG, and DTRI…GNNA. The Ca(2+) site is built by aspartate 427, aspartate 429, serine 431, histidine 433, glutamate 438, aspartate 463, aspartate 465, serine 467, threonine 469, glutamate 474, aspartate 499, aspartate 501, serine 503, tyrosine 505, glutamate 510, aspartate 533, aspartate 535, aspartate 537, arginine 539, and glutamate 544.

It belongs to the protein kinase superfamily. Ser/Thr protein kinase family. CDPK subfamily.

The protein resides in the membrane. The catalysed reaction is L-seryl-[protein] + ATP = O-phospho-L-seryl-[protein] + ADP + H(+). It catalyses the reaction L-threonyl-[protein] + ATP = O-phospho-L-threonyl-[protein] + ADP + H(+). Its activity is regulated as follows. Activated by calcium. Autophosphorylation may play an important role in the regulation of the kinase activity. May play a role in signal transduction pathways that involve calcium as a second messenger. In Oryza sativa subsp. japonica (Rice), this protein is Calcium-dependent protein kinase 11.